The chain runs to 227 residues: Protein lin-28 (227 aa).

A compositionally biased stretch (polar residues) spans 1–17; the sequence is MSTVVSEGRNDGNNRYS. The interval 1–27 is disordered; the sequence is MSTVVSEGRNDGNNRYSPQDEVEDRLP. Residues 52-120 form the CSD domain; sequence RYFGSCKWFN…GREAYAVSGE (69 aa). 2 CCHC-type zinc fingers span residues 143–160 and 166–183; these read RCFRCGKFATHKAKSCPN and KVCYTCGSEEHVSSICPE. The Zn(2+) site is built by Cys144, Cys147, His153, Cys158, Cys168, Cys171, His176, and Cys181. The tract at residues 181–227 is disordered; sequence CPERRRKHRPEQVAAEEAEAARMAAEKSSPTTSDDDIREKNSNSSDE.

Belongs to the lin-28 family. As to quaternary structure, component of a complex at least containing lep-2, lin-28 and the long non-coding RNA lep-5, which mediates the degradation of lin-28. In terms of processing, cleavage by caspase ced-3 during larval development probably induces lin-28 degradation.

It is found in the cytoplasm. Heterochronic protein which controls the choice of stage specific cell fates. Regulates the timing of the second larval stage events (L2 events) in the hypodermis. May negatively regulate the larval to adult transition via the suppression of the microRNA (miRNA) let-7 during L3. Through this regulatory role, controls the timing of the sexual maturation of the nervous system. Also has a role in the fox-1-sex-1-mediated determination of sexual fate. Plays a role in governing the developmental timing of male tail tip morphogenesis. Plays a role in controlling the seam cell number during larval stages. Plays a role in vulval development. The chain is Protein lin-28 from Caenorhabditis elegans.